The sequence spans 366 residues: Ribosomal RNA large subunit methyltransferase M (366 aa).

S-adenosyl-L-methionine contacts are provided by residues S188, 221–224, D240, D260, and D277; that span reads CPGG. Catalysis depends on K306, which acts as the Proton acceptor.

The protein belongs to the class I-like SAM-binding methyltransferase superfamily. RNA methyltransferase RlmE family. RlmM subfamily. As to quaternary structure, monomer.

Its subcellular location is the cytoplasm. It catalyses the reaction cytidine(2498) in 23S rRNA + S-adenosyl-L-methionine = 2'-O-methylcytidine(2498) in 23S rRNA + S-adenosyl-L-homocysteine + H(+). Its function is as follows. Catalyzes the 2'-O-methylation at nucleotide C2498 in 23S rRNA. The protein is Ribosomal RNA large subunit methyltransferase M of Sodalis glossinidius (strain morsitans).